The primary structure comprises 359 residues: TGACG-sequence-specific DNA-binding protein TGA-1A (359 aa).

Basic and acidic residues predominate over residues 44–54 (KRLDNETEDTS). Residues 44 to 72 (KRLDNETEDTSHGTVGTSNRYEPETSKPV) are disordered. One can recognise a bZIP domain in the interval 72–135 (VEKVLRRLAQ…GGVDASQLSY (64 aa)). Positions 73–125 (EKVLRRLAQNREAARKSRLRKKAYVQQLENSKLKLIQLEQELERARKQGMCVG) form a coiled coil. Residues 74 to 94 (KVLRRLAQNREAARKSRLRKK) form a basic motif region. The tract at residues 100-114 (LENSKLKLIQLEQEL) is leucine-zipper. The 212-residue stretch at 143–354 (TAVFDMEYGH…RVLSSQWATR (212 aa)) folds into the DOG1 domain.

This sequence belongs to the bZIP family. As to quaternary structure, binds DNA as a dimer.

It is found in the nucleus. In terms of biological role, transcriptional activator that binds specifically to the DNA sequence 5'-TGACG-3'. Recognizes ocs elements like the as-1 motif of the cauliflower mosaic virus 35S promoter. Binding to the as-1-like cis elements mediate auxin- and salicylic acid-inducible transcription. Could also bind to the Hex-motif (5'-TGACGTGG-3') another cis-acting element found in plant histone promoters. The chain is TGACG-sequence-specific DNA-binding protein TGA-1A (TGA1A) from Nicotiana tabacum (Common tobacco).